A 78-amino-acid chain; its full sequence is EEFANTLTLGMRLFGNVYAKEMLMILLVGLGTSGFLGAFGAFLPLIVWQAFGMFIGSLQAFIFAMLAMVYMAHKVEAH.

3 consecutive transmembrane segments (helical) span residues 13-33 (LFGNVYAKEMLMILLVGLGTS), 35-55 (FLGAFGAFLPLIVWQAFGMFI), and 57-77 (SLQAFIFAMLAMVYMAHKVEA).

Belongs to the ATPase A chain family. F-type ATPases have 2 components, CF(1) - the catalytic core - and CF(0) - the membrane proton channel. CF(1) has five subunits: alpha(3), beta(3), gamma(1), delta(1), epsilon(1). CF(0) has three main subunits: a(1), b(2) and c(9-12). The alpha and beta chains form an alternating ring which encloses part of the gamma chain. CF(1) is attached to CF(0) by a central stalk formed by the gamma and epsilon chains, while a peripheral stalk is formed by the delta and b chains.

It localises to the cell membrane. In terms of biological role, key component of the proton channel; it plays a direct role in the translocation of protons across the membrane. The polypeptide is ATP synthase subunit a (atpB) (Alkalihalobacillus alcalophilus (Bacillus alcalophilus)).